The chain runs to 143 residues: Phosphatidylethanolamine-binding protein homolog R644 (143 aa).

Belongs to the phosphatidylethanolamine-binding protein family.

It is found in the virion. The polypeptide is Phosphatidylethanolamine-binding protein homolog R644 (Acanthamoeba polyphaga mimivirus (APMV)).